A 175-amino-acid polypeptide reads, in one-letter code: Bacterial proteasome activator (175 aa).

Positions 152-175 are disordered; it reads LPPGIQVPGAQRGGATHPGTGQYL. Positions 173–175 match the HbYX motif motif; it reads QYL.

Belongs to the Bpa family. Forms a homooligomeric, either hexameric or heptameric, ring-like structure which stacks co-axially with the proteasomal alpha-rings.

In terms of biological role, interacts with the core proteasome alpha-subunit (PrcA) through its C-terminal hydrophobic-tyrosine-X motif (HbYX motif). Interaction of Bpa with the proteasome stimulates proteasomal peptidase and casein degradation activity, which suggests Bpa could play a role in the removal of non-native or damaged proteins by influencing the conformation of the proteasome complex upon interaction. In Mycolicibacterium smegmatis (strain ATCC 700084 / mc(2)155) (Mycobacterium smegmatis), this protein is Bacterial proteasome activator.